Reading from the N-terminus, the 447-residue chain is Phosphoglucosamine mutase (447 aa).

Residue Ser88 is the Phosphoserine intermediate of the active site. Mg(2+) contacts are provided by Ser88, Asp231, Asp233, and Asp235. Ser88 is subject to Phosphoserine.

Belongs to the phosphohexose mutase family. Requires Mg(2+) as cofactor. Post-translationally, activated by phosphorylation.

It catalyses the reaction alpha-D-glucosamine 1-phosphate = D-glucosamine 6-phosphate. Its function is as follows. Catalyzes the conversion of glucosamine-6-phosphate to glucosamine-1-phosphate. The chain is Phosphoglucosamine mutase from Methanococcus maripaludis (strain C5 / ATCC BAA-1333).